Reading from the N-terminus, the 151-residue chain is UPF0756 membrane protein lhv_0995 (151 aa).

Helical transmembrane passes span 4–24, 25–45, 52–72, 78–98, and 115–135; these read WLFLALVLVVALVGKNMSLII, ATGVVMALKLIPFASKWLPVI, WGVTVISVAILIPVATGQIGF, TFKSPAGWIAILAGIAVAILS, and LVLGTIIGVVVFKGVAAGPVI.

The protein belongs to the UPF0756 family.

It is found in the cell membrane. This is UPF0756 membrane protein lhv_0995 from Lactobacillus helveticus (strain DPC 4571).